The chain runs to 365 residues: Phosphopantothenate--cysteine ligase CAB2 (365 aa).

Positions Gln-228–Asp-250 are disordered. Polar residues predominate over residues Asn-238–Thr-248.

Belongs to the PPC synthetase family. In terms of assembly, homodimer.

It localises to the cytoplasm. The protein resides in the nucleus. The enzyme catalyses (R)-4'-phosphopantothenate + L-cysteine + CTP = N-[(R)-4-phosphopantothenoyl]-L-cysteine + CMP + diphosphate + H(+). Its pathway is cofactor biosynthesis; coenzyme A biosynthesis; CoA from (R)-pantothenate: step 2/5. Functionally, catalyzes the first step in the biosynthesis of coenzyme A from vitamin B5, where cysteine is conjugated to 4'-phosphopantothenate to form 4-phosphopantothenoylcysteine. The polypeptide is Phosphopantothenate--cysteine ligase CAB2 (CAB2) (Saccharomyces cerevisiae (strain ATCC 204508 / S288c) (Baker's yeast)).